Consider the following 447-residue polypeptide: C4-dicarboxylate transport protein 3 (447 aa).

8 consecutive transmembrane segments (helical) span residues 5–27 (TLGK…GVAA), 42–64 (IKLI…IARM), 77–99 (ALVY…VNLV), 146–165 (LARN…GIAL), 186–208 (VFSI…MAFT), 223–245 (LMAT…VARL), 315–337 (IFVA…LGVL), and 352–374 (FITL…VLLL).

The protein belongs to the dicarboxylate/amino acid:cation symporter (DAACS) (TC 2.A.23) family.

It localises to the cell inner membrane. Functionally, responsible for the transport of dicarboxylates such as succinate, fumarate, and malate from the periplasm across the membrane. This chain is C4-dicarboxylate transport protein 3 (dctA3), found in Ralstonia nicotianae (strain ATCC BAA-1114 / GMI1000) (Ralstonia solanacearum).